The chain runs to 579 residues: MSETLATDATAPAEKKDFIRQIVREDLASGKHTVIRTRFPPEPNGYLHIGHAKAICLDFGLAAEFGGLCNLRLDDTNPAKEDPEFVVAIQDDVRWLGYEWAQLRHASDYFQVYYLAAQKLIRDGHAFVCDLSAEQVRQYRGTLTEPGRNSPFRERSVEENLELFARMRAGEFPDGARTLRAKIDMASGNINLRDPALYRIKHVEHQNTGNAWPIYPMYDFAHSLGDAVEGITHSLCTLEFEDHRPLYDWCVDKVDLAGHPELLQPLLDKGLPREAAKPRQIEFSRLNINYTVMSKRKLTALVEEQLVDGWDDPRMYTLQGLRRRGYTPAAMRLFVDRVGISKQNSLIDFSVLEGCLREDLDAAAPRRMAVIDPLKLVLTNLPEGHTETLQFSNHPKDESFGTREVPFARELWIEREDFAEVPPKGWKRLVPGGEIRLRGAGIARVDEVIKNADGEIVELRGWLDPESRPGMEGANRKVKGTIHWVSAVHAVEAEIRLYDRLFSVEKPDDESEGKTYRDYLNPESKRNVRGYVEPSAAMAAPEQAFQFERSGYFVADRRDHSAATPVFNRSVTLRDTWAK.

Positions 41–51 (PEPNGYLHIGH) match the 'HIGH' region motif. Residues 42–44 (EPN) and 48–54 (HIGHAKA) contribute to the ATP site. L-glutamine contacts are provided by Asp-74 and Tyr-218. Residues Thr-237, 285–286 (RL), and 293–295 (MSK) each bind ATP. A 'KMSKS' region motif is present at residues 292-296 (VMSKR).

This sequence belongs to the class-I aminoacyl-tRNA synthetase family. In terms of assembly, monomer.

It is found in the cytoplasm. The enzyme catalyses tRNA(Gln) + L-glutamine + ATP = L-glutaminyl-tRNA(Gln) + AMP + diphosphate. In Xanthomonas euvesicatoria pv. vesicatoria (strain 85-10) (Xanthomonas campestris pv. vesicatoria), this protein is Glutamine--tRNA ligase.